Here is a 496-residue protein sequence, read N- to C-terminus: E1B 55 kDa protein (496 aa).

A disordered region spans residues Met-1–Gly-74. Residues Gly-45–Ala-61 show a composition bias toward low complexity. Ser-490 and Ser-491 each carry phosphoserine. Thr-495 is modified (phosphothreonine).

It belongs to the adenoviridae E1B 55 kDa protein family. In terms of assembly, interacts with host PML-4 and PML-5; this interaction promotes efficient subnuclear targeting of E1B-55K to PML nuclear bodies. Interacts with E4-ORF3 protein. Interacts with E4-ORF6 protein. Phosphorylation at the C-terminus affects the subcellular location.

It is found in the host nucleus. It localises to the host cytoplasm. In terms of biological role, plays a major role to prevent cellular inhibition of viral genome replication. Assembles an SCF-like E3 ubiquitin ligase complex based on the cellular proteins ELOB, ELOC, CUL5 and RBX1, in cooperation with viral E4orf6. This viral RING-type ligase ubiquitinates cellular substrates and targets them to proteasomal degradation: TP53/p53, LIG4, MRE11-RAD50-NBS1 (MRN) complex, ITGA3, DAXX and BLM. E1B-55K probably acts as the substrate-specific adapter of the SCF-like E3 ubiquitin ligase complex. Degradation of host TP53/p53 activity is essential for preventing E1A-induced TP53 accumulation that would otherwise lead to cell apoptosis and growth arrest. E1B-55K also inactivates TP53 transcription-factor activity by binding its transactivation domain. E1B-55K also functions as a SUMO1 E3 ligase for TP53 which causes the latter to be sequestered in promyelocytic leukemia (PML) nuclear bodies thereby contributing to maximal inhibition of TP53 function. This Homo sapiens (Human) protein is E1B 55 kDa protein.